The primary structure comprises 406 residues: Arginine biosynthesis bifunctional protein ArgJ (406 aa).

Residues Thr-152, Lys-179, Thr-190, Glu-277, Asn-401, and Ser-406 each contribute to the substrate site. Residue Thr-190 is the Nucleophile of the active site.

This sequence belongs to the ArgJ family. Heterotetramer of two alpha and two beta chains.

The protein localises to the cytoplasm. It catalyses the reaction N(2)-acetyl-L-ornithine + L-glutamate = N-acetyl-L-glutamate + L-ornithine. It carries out the reaction L-glutamate + acetyl-CoA = N-acetyl-L-glutamate + CoA + H(+). It participates in amino-acid biosynthesis; L-arginine biosynthesis; L-ornithine and N-acetyl-L-glutamate from L-glutamate and N(2)-acetyl-L-ornithine (cyclic): step 1/1. The protein operates within amino-acid biosynthesis; L-arginine biosynthesis; N(2)-acetyl-L-ornithine from L-glutamate: step 1/4. In terms of biological role, catalyzes two activities which are involved in the cyclic version of arginine biosynthesis: the synthesis of N-acetylglutamate from glutamate and acetyl-CoA as the acetyl donor, and of ornithine by transacetylation between N(2)-acetylornithine and glutamate. In Neisseria gonorrhoeae, this protein is Arginine biosynthesis bifunctional protein ArgJ.